The sequence spans 321 residues: MLNKLIERENLSFEESYELFNMLLNESEMRIAAYLVALQTKGVTADEIAGFAKAMRDNAVKIDLGEVTDTCGTGGDGSKTINVSTAVSIILSCFTKVAKHGNVSITSKSGSANVYEALGCKIPETPEDAKKSMDKTNFAFLFAPKYHPALKKIMPVRNELKVKTIFNILGPLANPANPKYQILGVNSPDLLDNVAIALSKVGGIKKALVLYGDGLDELTPNGTSKITEYNGKFETYEVTPKDFGLDYAKIMPCESPDESAKRLIDVFSGKLNEDRNFILMNAAAALYTSENASDFLDGVEIAKEAIESGKVLKKLEEIRNV.

5-phospho-alpha-D-ribose 1-diphosphate is bound by residues G72, 75-76, T80, 82-85, 99-107, and S111; these read GD, NVST, and KHGNVSITS. G72 contributes to the anthranilate binding site. S84 is a binding site for Mg(2+). Position 102 (N102) interacts with anthranilate. R157 provides a ligand contact to anthranilate. Positions 216 and 217 each coordinate Mg(2+).

The protein belongs to the anthranilate phosphoribosyltransferase family. As to quaternary structure, homodimer. Mg(2+) is required as a cofactor.

The enzyme catalyses N-(5-phospho-beta-D-ribosyl)anthranilate + diphosphate = 5-phospho-alpha-D-ribose 1-diphosphate + anthranilate. It functions in the pathway amino-acid biosynthesis; L-tryptophan biosynthesis; L-tryptophan from chorismate: step 2/5. Its function is as follows. Catalyzes the transfer of the phosphoribosyl group of 5-phosphorylribose-1-pyrophosphate (PRPP) to anthranilate to yield N-(5'-phosphoribosyl)-anthranilate (PRA). This Methanococcus maripaludis (strain C7 / ATCC BAA-1331) protein is Anthranilate phosphoribosyltransferase.